Here is a 147-residue protein sequence, read N- to C-terminus: UPAR/Ly6 domain-containing protein CG9338 (147 aa).

A signal peptide spans Met1–Ala23. Residues Ile24–Thr126 are Extracellular-facing. 5 cysteine pairs are disulfide-bonded: Cys26–Cys72, Cys29–Cys37, Cys51–Cys89, Cys101–Cys115, and Cys118–Cys123. An N-linked (GlcNAc...) asparagine glycan is attached at Asn68. Asn124 carries the GPI-anchor amidated asparagine lipid modification. Residues Gly125–Ala147 constitute a propeptide, removed in mature form. A helical membrane pass occupies residues Ser127–Ala147.

This sequence belongs to the quiver family.

The protein localises to the cell membrane. Its function is as follows. May be involved in regulating neuron excitability. In Drosophila melanogaster (Fruit fly), this protein is UPAR/Ly6 domain-containing protein CG9338.